Here is a 602-residue protein sequence, read N- to C-terminus: Elongation factor 4 (602 aa).

The tr-type G domain occupies 5–187; sequence DHIRNFAIIA…QIIVSLPAPE (183 aa). GTP-binding positions include 17-22 and 134-137; these read DHGKST and NKVD.

The protein belongs to the TRAFAC class translation factor GTPase superfamily. Classic translation factor GTPase family. LepA subfamily.

Its subcellular location is the cell inner membrane. It catalyses the reaction GTP + H2O = GDP + phosphate + H(+). Required for accurate and efficient protein synthesis under certain stress conditions. May act as a fidelity factor of the translation reaction, by catalyzing a one-codon backward translocation of tRNAs on improperly translocated ribosomes. Back-translocation proceeds from a post-translocation (POST) complex to a pre-translocation (PRE) complex, thus giving elongation factor G a second chance to translocate the tRNAs correctly. Binds to ribosomes in a GTP-dependent manner. The sequence is that of Elongation factor 4 from Pelagibacter ubique (strain HTCC1062).